We begin with the raw amino-acid sequence, 397 residues long: Lysophospholipid transporter LplT (397 aa).

The next 11 helical transmembrane spans lie at 16 to 36 (MMAVIVAQFLSAFGDNALLFA), 53 to 73 (VLQMVFVCAYILLAPFVGQVA), 91 to 111 (LGAVVIVFGGNPFVGYTLVGV), 139 to 159 (LMESSTIAAILIGSMAGGMLA), 164 to 184 (GAALGVCALAYAGAVGANLLI), 229 to 249 (WGAGVTLRFLLVLWVPVALGI), 257 to 277 (YLNAMVAVGIVAGAGAAAKLV), 282 to 302 (VSRCMPAGILIGIAVIFFSLQ), 304 to 324 (AALPAYLLLLLIGFFGGFFVV), 344 to 364 (IAVQNLGENTAMLLMLGLYSL), and 372 to 392 (VVGIGVGFGAIFALAIAGLWL).

The protein belongs to the major facilitator superfamily. LplT (TC 2.A.1.42) family.

Its subcellular location is the cell inner membrane. Catalyzes the facilitated diffusion of 2-acyl-glycero-3-phosphoethanolamine (2-acyl-GPE) into the cell. The sequence is that of Lysophospholipid transporter LplT from Cronobacter sakazakii (strain ATCC BAA-894) (Enterobacter sakazakii).